Here is a 498-residue protein sequence, read N- to C-terminus: Glycerol kinase (498 aa).

Threonine 12 serves as a coordination point for ADP. Residues threonine 12, threonine 13, and serine 14 each coordinate ATP. Residue threonine 12 participates in sn-glycerol 3-phosphate binding. Residue arginine 16 coordinates ADP. Residues arginine 82, glutamate 83, tyrosine 134, and aspartate 243 each contribute to the sn-glycerol 3-phosphate site. Residues arginine 82, glutamate 83, tyrosine 134, aspartate 243, and glutamine 244 each contribute to the glycerol site. Threonine 265 and glycine 308 together coordinate ADP. ATP is bound by residues threonine 265, glycine 308, glutamine 312, and glycine 409. The ADP site is built by glycine 409 and asparagine 413.

This sequence belongs to the FGGY kinase family. As to quaternary structure, homotetramer and homodimer (in equilibrium).

The catalysed reaction is glycerol + ATP = sn-glycerol 3-phosphate + ADP + H(+). Its pathway is polyol metabolism; glycerol degradation via glycerol kinase pathway; sn-glycerol 3-phosphate from glycerol: step 1/1. Its activity is regulated as follows. Activated by phosphorylation and inhibited by fructose 1,6-bisphosphate (FBP). Functionally, key enzyme in the regulation of glycerol uptake and metabolism. Catalyzes the phosphorylation of glycerol to yield sn-glycerol 3-phosphate. The chain is Glycerol kinase from Clostridium botulinum (strain 657 / Type Ba4).